Here is a 44-residue protein sequence, read N- to C-terminus: Photosystem I reaction center subunit IX (44 aa).

Residues 7 to 27 (YLSVAPVASTLWFVALAGLLI) form a helical membrane-spanning segment.

Belongs to the PsaJ family.

Its subcellular location is the plastid. The protein localises to the chloroplast thylakoid membrane. May help in the organization of the PsaE and PsaF subunits. The protein is Photosystem I reaction center subunit IX of Cicer arietinum (Chickpea).